Consider the following 232-residue polypeptide: 6-phosphogluconolactonase (232 aa).

It belongs to the glucosamine/galactosamine-6-phosphate isomerase family. 6-phosphogluconolactonase subfamily.

The catalysed reaction is 6-phospho-D-glucono-1,5-lactone + H2O = 6-phospho-D-gluconate + H(+). The protein operates within carbohydrate degradation; pentose phosphate pathway; D-ribulose 5-phosphate from D-glucose 6-phosphate (oxidative stage): step 2/3. In terms of biological role, hydrolysis of 6-phosphogluconolactone to 6-phosphogluconate. The sequence is that of 6-phosphogluconolactonase (pgl) from Rhizobium meliloti (strain 1021) (Ensifer meliloti).